Consider the following 407-residue polypeptide: Large ribosomal subunit protein uL3-like (407 aa).

The span at 1-31 shows a compositional bias: basic residues; sequence MSHRKFSAPRHGHLGFLPHKRSHRHRGKVKT. Disordered stretches follow at residues 1–35 and 383–407; these read MSHR…WPRD and QEKR…SGDL. The segment covering 394 to 407 has biased composition (basic and acidic residues); sequence KHLEKEKPETSGDL.

This sequence belongs to the universal ribosomal protein uL3 family. Component of the large ribosomal subunit in striated muscle cells.

In terms of biological role, heart- and skeletal muscle-specific component of the ribosome, which regulates muscle function. Component of the large ribosomal subunit in striated muscle cells: replaces the RPL3 paralog in the ribosome in these cells. The ribosome is a large ribonucleoprotein complex responsible for the synthesis of proteins in the cell. Inhibits myotube growth and muscle function. The protein is Large ribosomal subunit protein uL3-like (RPL3L) of Bos taurus (Bovine).